Consider the following 1846-residue polypeptide: Brefeldin A-inhibited guanine nucleotide-exchange protein 1 (1846 aa).

The DCB; DCB:DCB domain and DCB:HUS domain interaction stretch occupies residues 2 to 224; the sequence is YEGKKTKNMF…QEAKQMERER (223 aa). A Phosphoserine modification is found at S52. 3 disordered regions span residues 217-248, 264-302, and 347-410; these read AKQMERERHRQQHHLLQSPVSHHEPESPHLRY, DLDPQTHDVDKSLQDDIEPENGSDISSAENEQTEADQAT, and VSAS…SPGA. Residues 267-277 are compositionally biased toward basic and acidic residues; that stretch reads PQTHDVDKSLQ. Phosphoserine occurs at positions 286, 289, 290, 394, and 407. The segment covering 391–406 has biased composition (polar residues); sequence SVSSNDTQESGNSSGP. Residues 554–574 form an HUS; DCB:HUS domain interaction region; that stretch reads ADAQSVVDIYVNYDCDLNAAN. The tract at residues 631 to 684 is disordered; sequence PNSQTTLGQEKPSEQEISEIKHPETINRYGSLNSLESTSSSGIGSYSTQMSGTD. Residues 641–655 show a composition bias toward basic and acidic residues; sequence KPSEQEISEIKHPET. Positions 661–681 are enriched in low complexity; sequence SLNSLESTSSSGIGSYSTQMS. An SEC7 domain is found at 688–877; sequence QFEVLKQQKE…SAIYNEIAGK (190 aa). A Nuclear localization signal (NLS) motif is present at residues 708–712; sequence KKPKR. A phosphoserine mark is found at S1076, S1563, and S1566. Positions 1571–1600 are disordered; that stretch reads DSAQPRSSDNRQQAPLVSVSPASEEVSKGR. Residues 1574-1585 show a composition bias toward polar residues; the sequence is QPRSSDNRQQAP.

In terms of assembly, homodimer. Interacts with ARFGEF2/BIG2; both proteins are probably part of the same or very similar macromolecular complexes. Interacts with FKBP2. Interacts with MYO9B. Interacts with PRKAR1A and PRKAR2A. Interacts with PPP1CC. Interacts with NCL, FBL, NUP62 and U3 small nucleolar RNA. Interacts with DPY30. Interacts with PDE3A. Interacts with KANK1. Interacts with TBC1D22A and TBC1D22B. Post-translationally, phosphorylated. In vitro phosphorylated by PKA reducing its GEF activity and dephosphorylated by phosphatase PP1.

The protein resides in the cytoplasm. It localises to the perinuclear region. It is found in the golgi apparatus. Its subcellular location is the trans-Golgi network. The protein localises to the nucleus. The protein resides in the nucleolus. It localises to the nucleus matrix. It is found in the membrane. Inhibited by brefeldin A. Functionally, promotes guanine-nucleotide exchange on ARF1 and ARF3. Promotes the activation of ARF1/ARF3 through replacement of GDP with GTP. Involved in vesicular trafficking. Required for the maintenance of Golgi structure; the function may be independent of its GEF activity. Required for the maturation of integrin beta-1 in the Golgi. Involved in the establishment and persistence of cell polarity during directed cell movement in wound healing. Proposed to act as A kinase-anchoring protein (AKAP) and may mediate crosstalk between Arf and PKA pathways. Inhibits GAP activity of MYO9B probably through competitive RhoA binding. The function in the nucleus remains to be determined. The chain is Brefeldin A-inhibited guanine nucleotide-exchange protein 1 (Arfgef1) from Rattus norvegicus (Rat).